A 427-amino-acid chain; its full sequence is Glutamate-1-semialdehyde 2,1-aminomutase (427 aa).

At Lys-269 the chain carries N6-(pyridoxal phosphate)lysine.

It belongs to the class-III pyridoxal-phosphate-dependent aminotransferase family. HemL subfamily. Homodimer. It depends on pyridoxal 5'-phosphate as a cofactor.

It localises to the cytoplasm. It carries out the reaction (S)-4-amino-5-oxopentanoate = 5-aminolevulinate. It participates in porphyrin-containing compound metabolism; protoporphyrin-IX biosynthesis; 5-aminolevulinate from L-glutamyl-tRNA(Glu): step 2/2. The protein is Glutamate-1-semialdehyde 2,1-aminomutase of Thermus thermophilus (strain ATCC BAA-163 / DSM 7039 / HB27).